Reading from the N-terminus, the 244-residue chain is Chaperone protein FimB/FhaD (244 aa).

The first 24 residues, 1 to 24 (MARWRRRLGVAALGAAMLASLAPA), serve as a signal peptide directing secretion.

Belongs to the periplasmic pilus chaperone family.

The protein localises to the periplasm. In terms of biological role, required for the biogenesis of the filamentous hemagglutinin and the fimbria. This is Chaperone protein FimB/FhaD (fimB) from Bordetella pertussis (strain Tohama I / ATCC BAA-589 / NCTC 13251).